The following is a 44-amino-acid chain: 2S seed storage albumin protein (44 aa).

2 cysteine pairs are disulfide-bonded: Cys-7/Cys-42 and Cys-19/Cys-31.

The protein belongs to the 2S seed storage albumins family. The mature protein consists of a small and a large chain linked by 2 disulfide bonds.

In terms of biological role, this is a 2S seed storage protein. Has antifungal activity. Inhibits spore germination in H.sativum (IC(50)=62.5 ug/ml) and P.betae (IC(50)=62.5 ug/ml). Inhibits growth of H.sativum, V.albo-atrum and P.infestans. The sequence is that of 2S seed storage albumin protein from Taraxacum officinale (Common dandelion).